Reading from the N-terminus, the 247-residue chain is Thioredoxin reductase-like selenoprotein T homolog selt-1.1 (247 aa).

The N-terminal stretch at 1 to 26 (MSRFGVFIIGVLFFMSVCDVLRTVSA) is a signal peptide. A disulfide bridge links Cys92 with Cys95.

This sequence belongs to the SelWTH family. SELT subfamily. As to expression, broadly expressed in neurons of nervous system including ADL, ASH, ASI, ASJ, ASK and AWB amphid sensilla neurons, in epithelial cells including hypodermal, arcade, pharyngeal, vulval and rectal cells, and in somatic muscle cells of the head, neck and body wall, and non-striated pharyngeal muscles.

The protein resides in the endoplasmic reticulum. The enzyme catalyses [thioredoxin]-dithiol + NADP(+) = [thioredoxin]-disulfide + NADPH + H(+). Probably has thioredoxin reductase-like oxidoreductase activity. Plays a role in regulating the oxidative stress response, and odorant and pathogenic bacteria avoidance behavior. In Caenorhabditis elegans, this protein is Thioredoxin reductase-like selenoprotein T homolog selt-1.1.